A 154-amino-acid polypeptide reads, in one-letter code: Oleosin 16.4 kDa (154 aa).

An N-acetylalanine modification is found at Ala-2. The interval Ala-2–Thr-33 is polar. A run of 3 helical transmembrane segments spans residues Val-31 to Thr-51, Leu-65 to Ala-85, and Gly-86 to Asn-106. Positions Val-34–Phe-105 are hydrophobic.

The protein belongs to the oleosin family.

The protein localises to the lipid droplet. It is found in the membrane. Functionally, may have a structural role to stabilize the lipid body during desiccation of the seed by preventing coalescence of the oil. Probably interacts with both lipid and phospholipid moieties of lipid bodies. May also provide recognition signals for specific lipase anchorage in lipolysis during seedling growth. This chain is Oleosin 16.4 kDa (MATP7), found in Gossypium hirsutum (Upland cotton).